The primary structure comprises 154 residues: Myoglobin (154 aa).

The Globin domain maps to 2–148 (GLSDGEWQLV…FRHDMAAKYK (147 aa)). Ser4 carries the phosphoserine modification. His65 is a binding site for nitrite. His65 lines the O2 pocket. Thr68 bears the Phosphothreonine mark. His94 serves as a coordination point for heme b.

It belongs to the globin family. In terms of assembly, monomeric.

The protein localises to the cytoplasm. It localises to the sarcoplasm. The enzyme catalyses Fe(III)-heme b-[protein] + nitric oxide + H2O = Fe(II)-heme b-[protein] + nitrite + 2 H(+). It carries out the reaction H2O2 + AH2 = A + 2 H2O. Its function is as follows. Monomeric heme protein which primary function is to store oxygen and facilitate its diffusion within muscle tissues. Reversibly binds oxygen through a pentacoordinated heme iron and enables its timely and efficient release as needed during periods of heightened demand. Depending on the oxidative conditions of tissues and cells, and in addition to its ability to bind oxygen, it also has a nitrite reductase activity whereby it regulates the production of bioactive nitric oxide. Under stress conditions, like hypoxia and anoxia, it also protects cells against reactive oxygen species thanks to its pseudoperoxidase activity. The sequence is that of Myoglobin (MB) from Osphranter rufus (Red kangaroo).